The sequence spans 174 residues: Magnetosome protein MamT (174 aa).

Over 1 to 9 (MGTPGGGRR) the chain is Cytoplasmic. A helical transmembrane segment spans residues 10 to 28 (WMTLISITLLMVVGLGLYW). At 29–174 (DELSLSAGIS…EKKSGIKWLL (146 aa)) the chain is on the lumenal side. The MCR (magnetochrome) 1 motif lies at 87 to 107 (VMPGTGMPHPYVGDCIQCHLM). 6 residues coordinate heme: Cys-101, Cys-104, His-105, Cys-152, Cys-155, and His-156. Residues 138 to 158 (ILPTTRQPHPPAGRCIKCHDI) carry the MCR 2 motif.

Belongs to the magnetosome MamT family. Requires heme as cofactor.

It localises to the magnetosome membrane. Its function is as follows. May play a role in magnetite crystal maturation. May transfer electrons to balance the Fe(2+)-Fe(3+) ratio during magnetite formation. The chain is Magnetosome protein MamT from Magnetospirillum gryphiswaldense (strain DSM 6361 / JCM 21280 / NBRC 15271 / MSR-1).